The following is a 350-amino-acid chain: tRNA uridine(34) hydroxylase (350 aa).

Positions 146 to 240 constitute a Rhodanese domain; the sequence is DDPDAVFIDM…YARRAREQGL (95 aa). The Cysteine persulfide intermediate role is filled by Cys-200. The span at 319 to 328 shows a compositional bias: basic and acidic residues; the sequence is RRRRAGRENG. Residues 319-350 form a disordered region; it reads RRRRAGRENGNKIFNKSRGRLNSKLSIPDPAE.

The protein belongs to the TrhO family.

The catalysed reaction is uridine(34) in tRNA + AH2 + O2 = 5-hydroxyuridine(34) in tRNA + A + H2O. Its function is as follows. Catalyzes oxygen-dependent 5-hydroxyuridine (ho5U) modification at position 34 in tRNAs. The sequence is that of tRNA uridine(34) hydroxylase from Salmonella gallinarum (strain 287/91 / NCTC 13346).